Reading from the N-terminus, the 254-residue chain is RNA polymerase sigma-D factor (254 aa).

Positions 54–67 (DLMSLGMLGLYDAL) match the Polymerase core binding motif. Positions 220 to 239 (LTEIGQVLNLSTSRISQIHS) form a DNA-binding region, H-T-H motif.

As to quaternary structure, monomer. Interacts transiently with the RNAP core.

Its function is as follows. Sigma factors are initiation factors that promote the attachment of RNA polymerase (RNAP) to specific initiation sites and are then released. This alternative sigma factor is required for the transcription of the flagellin and motility genes as well as for wild-type chemotaxis. Associates with the RNAP core during all growth phases with a peak at the transition to stationary phase. The polypeptide is RNA polymerase sigma-D factor (sigD) (Bacillus subtilis (strain 168)).